The sequence spans 419 residues: Gamma-glutamyl phosphate reductase (419 aa).

This sequence belongs to the gamma-glutamyl phosphate reductase family.

The protein resides in the cytoplasm. The enzyme catalyses L-glutamate 5-semialdehyde + phosphate + NADP(+) = L-glutamyl 5-phosphate + NADPH + H(+). It participates in amino-acid biosynthesis; L-proline biosynthesis; L-glutamate 5-semialdehyde from L-glutamate: step 2/2. In terms of biological role, catalyzes the NADPH-dependent reduction of L-glutamate 5-phosphate into L-glutamate 5-semialdehyde and phosphate. The product spontaneously undergoes cyclization to form 1-pyrroline-5-carboxylate. In Marinomonas sp. (strain MWYL1), this protein is Gamma-glutamyl phosphate reductase.